Reading from the N-terminus, the 432-residue chain is Glutamyl-tRNA reductase (432 aa).

Substrate is bound by residues 50 to 53 (TCNR), serine 110, 115 to 117 (ETQ), and glutamine 121. Cysteine 51 acts as the Nucleophile in catalysis. 190–195 (GAGEMS) lines the NADP(+) pocket.

It belongs to the glutamyl-tRNA reductase family. As to quaternary structure, homodimer.

It carries out the reaction (S)-4-amino-5-oxopentanoate + tRNA(Glu) + NADP(+) = L-glutamyl-tRNA(Glu) + NADPH + H(+). Its pathway is porphyrin-containing compound metabolism; protoporphyrin-IX biosynthesis; 5-aminolevulinate from L-glutamyl-tRNA(Glu): step 1/2. Functionally, catalyzes the NADPH-dependent reduction of glutamyl-tRNA(Glu) to glutamate 1-semialdehyde (GSA). This chain is Glutamyl-tRNA reductase, found in Aliarcobacter butzleri (strain RM4018) (Arcobacter butzleri).